A 264-amino-acid chain; its full sequence is Granzyme K (264 aa).

Residues 1-24 (MTKFSSFSLFFLIVGAYMTHVCFN) form the signal peptide. A propeptide spans 25–26 (ME) (activation peptide). Positions 27–259 (IIGGKEVSPH…YQTWIKSNLV (233 aa)) constitute a Peptidase S1 domain. C52 and C68 form a disulfide bridge. Residues H67 and D116 each act as charge relay system in the active site. 3 disulfide bridges follow: C149–C220, C181–C199, and C210–C234. Catalysis depends on S214, which acts as the Charge relay system.

The protein belongs to the peptidase S1 family. Granzyme subfamily. As to expression, expressed in lung, spleen, thymus and peripheral blood leukocytes.

Its subcellular location is the secreted. The protein localises to the cytoplasmic granule. This chain is Granzyme K (GZMK), found in Homo sapiens (Human).